The following is a 350-amino-acid chain: Decarboxylase iboD (350 aa).

The protein belongs to the phosphatidylserine decarboxylase family.

The protein operates within secondary metabolite biosynthesis. In terms of biological role, decarboxylase; part of the gene cluster that mediates the biosynthesis of the psychoactive metabolites ibotenic acid and muscimol. The first committed step is glutamate hydroxylation by the 2-oxoglutarate-dependent dioxygenase iboH, and the last step is decarboxylation of ibotenic acid to muscimol by the decarboxylase iboD. The order of the intermediate reactions is somewhat ambiguous. IboA likely activates the carboxylic acid at position 5 to introduce an amide bond, and the flavin monooxygenase iboF generates the N-O bond. There are several options for the latter step. One option is that iboF directly hydroxylates the amide nitrogen formed by iboA to produce a hydroxamic acid species. Another option is that iboF hydroxylates an external N-containing compound, whose resulting N-O bond is subsequently introduced into the hydroxyglutamate scaffold. The paralogous PLP-dependent cystathionine gamma-synthase-like enzymes iboG1 and iboG2 are likely involved in substitution of the OH group at position 3 by the O-N moiety. The first cyclic intermediate is most probably tricholomic acid which is likely desaturated to ibotenic acid by the cytochrome P450 monooxygenase iboC. The protein is Decarboxylase iboD of Amanita muscaria (strain Koide BX008).